A 179-amino-acid polypeptide reads, in one-letter code: ATP-dependent protease subunit HslV (179 aa).

Residue T7 is part of the active site. G162, C165, and T168 together coordinate Na(+).

Belongs to the peptidase T1B family. HslV subfamily. A double ring-shaped homohexamer of HslV is capped on each side by a ring-shaped HslU homohexamer. The assembly of the HslU/HslV complex is dependent on binding of ATP.

It is found in the cytoplasm. It catalyses the reaction ATP-dependent cleavage of peptide bonds with broad specificity.. Its activity is regulated as follows. Allosterically activated by HslU binding. Protease subunit of a proteasome-like degradation complex believed to be a general protein degrading machinery. The chain is ATP-dependent protease subunit HslV from Bordetella petrii (strain ATCC BAA-461 / DSM 12804 / CCUG 43448).